The sequence spans 2669 residues: Nucleosome-remodeling factor subunit NURF301 (2669 aa).

Residues 1–12 (MSGRGSRKRGRP) are compositionally biased toward basic residues. The required for function in nucleosome sliding stretch occupies residues 1 to 121 (MSGRGSRKRG…EEDKSDNEDD (121 aa)). Residues 1–125 (MSGRGSRKRG…SDNEDDMLLT (125 aa)) are disordered. A DNA-binding region (a.T hook) is located at residues 6 to 18 (SRKRGRPPKTPNE). Residues 38–56 (GKSQPSTPSASRGISPQSD) show a composition bias toward polar residues. Phosphoserine is present on residues serine 40, serine 52, serine 55, serine 59, and serine 62. Over residues 66–82 (HTNRSRGSAAKRGRGRK) the composition is skewed to basic residues. Over residues 109–125 (GDSEEDKSDNEDDMLLT) the composition is skewed to acidic residues. In terms of domain architecture, DDT spans 188-248 (NTHVLRALSI…LKAILREEDA (61 aa)). The PHD-type 1 zinc-finger motif lies at 339–386 (DDHCRVCHRLGDLLCCETCPAVYHLECVDPPMNDVPTEDWQCGLCRSH). Residues 460 to 515 (RLHSQITERRDEIERQMKLTETLTNEHKHTKRSVIEIEQEAKNELLEKEVLDEDEK) are a coiled coil. The segment at 505–538 (LEKEVLDEDEKDGDAKSESQSIEGTKKQEECKMV) is disordered. Residues 528-537 (GTKKQEECKM) show a composition bias toward basic and acidic residues. The stretch at 688–720 (LQRITSAEREERKKLEKREKRERDDEEERNRLA) forms a coiled coil. Disordered regions lie at residues 1026–1048 (EGKRESTQVAVDDSEEGKPAESE), 1135–1159 (TGLNSGNAEDVDMTPGWRRKRNQKS), and 1406–1425 (RSGLRKRKRAESPQPTEPQI). Residue serine 1417 is modified to Phosphoserine. Residue threonine 1527 is modified to Phosphothreonine. Positions 1559-1590 (SRTGGANTAAAAASPTVGGSTSTQSNPSTSTP) are enriched in low complexity. Disordered regions lie at residues 1559-1596 (SRTGGANTAAAAASPTVGGSTSTQSNPSTSTPHKVQII), 2181-2203 (INNGDDQENSKCAETENSNITTN), and 2283-2307 (TNEWETCSRGSVNEEALTPSRQTDD). The segment covering 2283 to 2293 (TNEWETCSRGS) has biased composition (polar residues). Residues 2338–2373 (KNDEVAELGEQKQSQLERHKELLKKNILRKRSLLER) are a coiled coil. Positions 2382–2432 (DVKTKVQRHVRPLSNASPDEQSENERSGEPNLDFKRTEVQNPRHGAGRPKK) are disordered. 3 positions are modified to phosphoserine: serine 2395, serine 2398, and serine 2403. Residues 2404–2419 (ENERSGEPNLDFKRTE) are compositionally biased toward basic and acidic residues. The PHD-type 2 zinc finger occupies 2481–2546 (EFICIDCKRA…EYVCPECQRK (66 aa)). The Bromo domain maps to 2556–2660 (KLTSNDVEEL…SYFVQKIKNF (105 aa)).

Belongs to the BPTF family. As to quaternary structure, component of the NURF complex composed of Caf1-55, E(bx), Nurf-38 and Iswi. Interacts with Trl. Interacts with histone H3-K4Me3.

The protein localises to the nucleus. Histone-binding component of NURF (nucleosome remodeling factor), a complex which catalyzes ATP-dependent nucleosome sliding and facilitates transcription of chromatin. Specifically recognizes H3 tails trimethylated on 'Lys-4' (H3K4me3), which mark transcription start sites of virtually all active genes. Required for homeotic gene expression, proper larval blood cell development, normal male X chromosome morphology, ecdysteroid signaling and metamorphosis. The protein is Nucleosome-remodeling factor subunit NURF301 (E(bx)) of Drosophila melanogaster (Fruit fly).